The chain runs to 308 residues: MVRVANSITELIGNTPIVKLNRLADENSADVYLKLEYMNPGSSVKDRIGLAMIEAAEKEGKLKAGNTIIEPTSGNTGIGLAMVAAAKGLKAILVMPDTMSMERRNLLRAYGAELVLTPGAEGMKGAIKKAEELAEKHGYFVPQQFNNPSNPEIHRQTTGKEIVEQFGDDQLDAFVAGIGTGGTITGAGEVLKEAYPSIKIYAVEPSDSPVLSGGKPGPHKIQGIGAGFVPDILNTEVYDEIFPVKNEEAFEYARRAAREEGILGGISSGAAIYAALQVAKKLGKGKKVLAIIPSNGERYLSTPLYQFD.

Position 45 is an N6-(pyridoxal phosphate)lysine (Lys45). Pyridoxal 5'-phosphate-binding positions include Asn75, 179-183, and Ser267; that span reads GTGGT.

This sequence belongs to the cysteine synthase/cystathionine beta-synthase family. Homodimer. Forms CymR(2):CysK(2) or CymR(4):CysK(4) complexes in the absence of O-acetylserine. The cofactor is pyridoxal 5'-phosphate.

It carries out the reaction O-acetyl-L-serine + hydrogen sulfide = L-cysteine + acetate. It participates in amino-acid biosynthesis; L-cysteine biosynthesis; L-cysteine from L-serine: step 2/2. In terms of biological role, catalyzes the conversion of O-acetylserine to cysteine. Also acts as a sensor of cysteine availability in the signal transduction pathway modulating CymR activity. When cysteine is present, the pool of O-acetylserine (OAS) is low, which leads to the formation of a CymR-CysK complex and transcriptional repression of the CymR regulon occurs. In the absence of cysteine, the OAS pool is high and the CymR-CysK complex is mostly dissociated, leading to a faster dissociation of CymR from its DNA targets and the lifting of CymR-dependent repression. This Bacillus subtilis (strain 168) protein is Cysteine synthase (cysK).